The following is a 1906-amino-acid chain: Serine protease/ABC transporter B family protein tagB (1906 aa).

The N-terminal stretch at 1–31 (MKFQFSSPSKIFLFSSVILILIFIGIKFELL) is a signal peptide. The interval 96-134 (INNNNNNNNKLNNNNNNNNNNNNNNNNNNNNNNNNNNNN) is disordered. The 408-residue stretch at 356 to 763 (PTVIFGTKDK…ASSTNPSNAI (408 aa)) folds into the Peptidase S8 domain. Active-site charge relay system residues include D387 and H432. N594, N621, and N672 each carry an N-linked (GlcNAc...) asparagine glycan. S695 serves as the catalytic Charge relay system. N747 and N823 each carry an N-linked (GlcNAc...) asparagine glycan. Helical transmembrane passes span 1011 to 1031 (YIIIIVAGGTMVLIILLLMWI), 1076 to 1096 (FIIELTIATACSLVATAASIL), and 1121 to 1141 (FIIIFILAFIEFLFTNVGSWI). Residues 1080-1363 (LTIATACSLV…LFGVYVSYIQ (284 aa)) form the ABC transmembrane type-1 domain. Residue N1172 is glycosylated (N-linked (GlcNAc...) asparagine). 3 helical membrane passes run 1210–1230 (LVFIFTISWKLSLAFFAAVPI), 1309–1329 (WLLIESLTFVILYFSAYLVIQ), and 1332–1352 (FTVGLMISFSLYIGYVVDASS). The disordered stretch occupies residues 1385–1455 (LEEEEADRLA…NNNNNIGNLD (71 aa)). Residues 1396-1405 (LSGGGGGGGD) show a composition bias toward gly residues. Residues 1407–1420 (GDDKKDKQNIENGK) are compositionally biased toward basic and acidic residues. Residues 1518 to 1756 (IEFKNVSFRY…KGKYYRMFSE (239 aa)) form the ABC transporter domain. N-linked (GlcNAc...) asparagine glycosylation is present at N1522. 1553–1560 (GPSGSGKS) contributes to the ATP binding site. A glycan (N-linked (GlcNAc...) asparagine) is linked at N1658. A disordered region spans residues 1757–1906 (DKDDTPLQNN…QMDEENDEER (150 aa)). Composition is skewed to low complexity over residues 1765–1779 (NNNNNKNNNNNNNNN) and 1814–1871 (EQQE…DYDQ). The segment covering 1872–1886 (VPPPPPLPSESPSPP) has biased composition (pro residues).

The protein in the C-terminal section; belongs to the ABC transporter superfamily. ABCB family. Multidrug resistance exporter (TC 3.A.1.201) subfamily. In the N-terminal section; belongs to the peptidase S8 family.

The protein resides in the membrane. Its function is as follows. Intercellular communication via tagB may mediate integration of cellular differentiation with morphogenesis. The sequence is that of Serine protease/ABC transporter B family protein tagB (tagB) from Dictyostelium discoideum (Social amoeba).